An 884-amino-acid chain; its full sequence is MTSTNDIRRSFLDYFGGAGHHIEPSAPLVPYNDPTLMFVNAGMVPFKNVFTGLEKRPYSTAASSQKCVRAGGKHNDLDNVGYTARHHTFFEMLGNFSFGDYFKEQAIHHAWTLITQTWGLAPEKLTATVYHTDDEAFDLWKKIAGLPDERIIRIPTSDNFWSMGDTGPCGPCSEIFYDHGDHVRGGPPGSPEEDGDRFVEIWNLVFMQYEQLPGGERVDLPRPSIDTGMGLERVAAVLQGVHDNYDTDTFKALIEASVELTGVRADEAHRASHRVIADHLRASSFLVADGVLPSNEGRGYVLRRIMRRAMRHAHLLGAKDPLMHRLLPSLTAEMGAAYPELIRAQPLIAETLEREEVKFRQTLDKGLRLLDEATADMGRGDTLVGDVAFKLYDTYGFPYDLTEDALRSKGISVDRAGFDAAMAQQKAAARAAWKGSGQKASEEIWFDLAETHGSTEFTGYTSTSGEATVIALVRDGQPVEEARAGDEVIVLTNQTPFYGESGGQMGDAGMIATLEGAKASVSDTGKPLGRLHTHQAKLEAGTLKVGDTVQLTVDAERRDRIRANHSATHLLHAALRNRLGGHVTQKGSLVAADRFRFDFSHPKALTAAEIADIEADVNAQIRGNEPVTTRLMTPDDAIAAGALALFGEKYGDEVRVLAMGKADDRNYSVELCGGTHVRALGDIALFKIVSESAVSSGVRRIEALTGEAARQWLNGRDEALKAAAAALKTSPDEVPARVAQLAEQLKKAERELADAKKALALGGSGGDGGAAAGPAVEQVGDVAFLAQVVDGLDPKELRGTVDGLKKQVGSGVAMLVAVNDGRASVAVGVTDDKTGHHSAVDLVKAAVVALGGQGGGGRPDMAQGGGPNGGAANDAVAAVKAALA.

The Zn(2+) site is built by histidine 565, histidine 569, cysteine 672, and histidine 676.

Belongs to the class-II aminoacyl-tRNA synthetase family. It depends on Zn(2+) as a cofactor.

It localises to the cytoplasm. The catalysed reaction is tRNA(Ala) + L-alanine + ATP = L-alanyl-tRNA(Ala) + AMP + diphosphate. Functionally, catalyzes the attachment of alanine to tRNA(Ala) in a two-step reaction: alanine is first activated by ATP to form Ala-AMP and then transferred to the acceptor end of tRNA(Ala). Also edits incorrectly charged Ser-tRNA(Ala) and Gly-tRNA(Ala) via its editing domain. The chain is Alanine--tRNA ligase from Sphingopyxis alaskensis (strain DSM 13593 / LMG 18877 / RB2256) (Sphingomonas alaskensis).